We begin with the raw amino-acid sequence, 178 residues long: Nicotinamide-nucleotide adenylyltransferase (178 aa).

Belongs to the archaeal NMN adenylyltransferase family.

It is found in the cytoplasm. It catalyses the reaction beta-nicotinamide D-ribonucleotide + ATP + H(+) = diphosphate + NAD(+). The protein operates within cofactor biosynthesis; NAD(+) biosynthesis; NAD(+) from nicotinamide D-ribonucleotide: step 1/1. This Pyrobaculum aerophilum (strain ATCC 51768 / DSM 7523 / JCM 9630 / CIP 104966 / NBRC 100827 / IM2) protein is Nicotinamide-nucleotide adenylyltransferase.